The chain runs to 401 residues: LysM domain-containing GPI-anchored protein LYP4 (401 aa).

The N-terminal stretch at 1-23 (MPPPLLLLLLLAAAAAAVAPARS) is a signal peptide. 4 cysteine pairs are disulfide-bonded: Cys-30–Cys-96, Cys-36–Cys-162, Cys-94–Cys-160, and Cys-96–Cys-162. 2 consecutive LysM domains span residues 106–156 (VRYV…TLFV) and 175–218 (LTYV…IIVV). Intrachain disulfides connect Cys-223–Cys-255 and Cys-250–Cys-279. N-linked (GlcNAc...) asparagine glycosylation occurs at Asn-240. N-linked (GlcNAc...) asparagine glycans are attached at residues Asn-281, Asn-288, and Asn-310. A lipid anchor (GPI-anchor amidated serine) is attached at Ser-373. A propeptide spans 374–401 (SGPPPAGRHVVGDVLGAFALCLVGNLLW) (removed in mature form).

Interacts with LYP6. Interacts with CEBIP. Interacts with CERK1. In terms of tissue distribution, expressed in roots and leaves.

The protein localises to the cell membrane. In terms of biological role, functions in innate immunity. Functions as a pattern recognition receptor (PRR), sensing bacterial peptidoglycan (PGN) and fungal chitin at the cell surface. Involved in resistance against the bacterial pathogen Xanthomonas oryzae pv. oryzae (Xoo) and the fungal pathogen Magnaporthe oryzae. Binds PGN and fungal chitin in vitro. Involved in microbe-associated molecular patterns (MAMPs) perception and participates in the activation of defense genes against the bacterial pathogen Xanthomonas oryzae pv. oryzicola (Xoc) or the fungal pathogen Magnaporthe oryzae. The chain is LysM domain-containing GPI-anchored protein LYP4 from Oryza sativa subsp. japonica (Rice).